The sequence spans 975 residues: Translation initiation factor IF-2 (975 aa).

The segment covering 48–63 (DHLRKSHGATDGDKRK) has biased composition (basic and acidic residues). 2 disordered regions span residues 48–84 (DHLRKSHGATDGDKRKITLTRRHTSEIKQADATGKAR) and 96–388 (FVKR…QAPT). The segment covering 104–115 (ETGADQAQAQTD) has biased composition (low complexity). Positions 120 to 177 (AELKRREEEARREAELLEKQAQELRERQERLEREEAERRAREEAAEAERRRAEEEAAA) are enriched in basic and acidic residues. Residues 178–211 (KRAAAAQAEAAQQAAAAREQAQRAQSEPAEQSAQ) show a composition bias toward low complexity. Residues 212–263 (DEARAAAERAAQREAAKKAEDAAREAADKARAEQEEIRKRREAAEAEARAIR) are compositionally biased toward basic and acidic residues. The segment covering 302 to 330 (KPAGEAAAARPAAKKPASGAPAPAAAPAG) has biased composition (low complexity). The span at 359-372 (SSGGVDRGWRGGPK) shows a compositional bias: gly residues. Residues 475–644 (PRPPVVTVMG…LLQAEVLELK (170 aa)) enclose the tr-type G domain. The tract at residues 484 to 491 (GHVDHGKT) is G1. 484–491 (GHVDHGKT) is a binding site for GTP. The tract at residues 509–513 (GITQH) is G2. The segment at 530–533 (DTPG) is G3. Residues 530–534 (DTPGH) and 584–587 (NKID) contribute to the GTP site. The segment at 584–587 (NKID) is G4. Residues 620–622 (SAK) are G5.

This sequence belongs to the TRAFAC class translation factor GTPase superfamily. Classic translation factor GTPase family. IF-2 subfamily.

It localises to the cytoplasm. In terms of biological role, one of the essential components for the initiation of protein synthesis. Protects formylmethionyl-tRNA from spontaneous hydrolysis and promotes its binding to the 30S ribosomal subunits. Also involved in the hydrolysis of GTP during the formation of the 70S ribosomal complex. This Burkholderia pseudomallei (strain 1710b) protein is Translation initiation factor IF-2.